The chain runs to 395 residues: ASTRA-associated protein 1 (395 aa).

3 WD repeats span residues 7–48 (AHVS…PIAS), 221–260 (HYPE…LPVV), and 343–386 (INPG…TGYN).

Belongs to the WD repeat ASA1 family. Component of the ASTRA chromatin remodeling machinery complex.

It is found in the nucleus. Component of the ASTRA complex involved in chromatin remodeling. The chain is ASTRA-associated protein 1 (ASA1) from Eremothecium gossypii (strain ATCC 10895 / CBS 109.51 / FGSC 9923 / NRRL Y-1056) (Yeast).